Here is a 379-residue protein sequence, read N- to C-terminus: 3-dehydroquinate synthase (379 aa).

NAD(+) contacts are provided by residues 113–117 (GVIGD), 137–138 (TS), Lys150, and Lys159. 3 residues coordinate Zn(2+): Glu192, His256, and His274.

The protein belongs to the sugar phosphate cyclases superfamily. Dehydroquinate synthase family. Requires Co(2+) as cofactor. Zn(2+) is required as a cofactor. It depends on NAD(+) as a cofactor.

It is found in the cytoplasm. The enzyme catalyses 7-phospho-2-dehydro-3-deoxy-D-arabino-heptonate = 3-dehydroquinate + phosphate. It functions in the pathway metabolic intermediate biosynthesis; chorismate biosynthesis; chorismate from D-erythrose 4-phosphate and phosphoenolpyruvate: step 2/7. In terms of biological role, catalyzes the conversion of 3-deoxy-D-arabino-heptulosonate 7-phosphate (DAHP) to dehydroquinate (DHQ). This Zymomonas mobilis subsp. mobilis (strain ATCC 31821 / ZM4 / CP4) protein is 3-dehydroquinate synthase.